Here is a 542-residue protein sequence, read N- to C-terminus: Major facilitator superfamily transporter mfsA (542 aa).

Transmembrane regions (helical) follow at residues 19–39 (FAAV…AGLL), 70–90 (GAVT…SMFC), 99–119 (LIFM…VCYT), 127–149 (FVIG…PVWQ), 160–180 (FLVC…YWVV), 194–214 (FPVA…LMLP), 321–341 (IMGG…FFMI), 349–369 (LYLI…ACLI), 380–400 (AVGI…LPWI), 413–432 (VGAS…VVMF), and 444–464 (VYLF…FFYV).

Belongs to the major facilitator superfamily. Sugar transporter (TC 2.A.1.1) family.

It localises to the membrane. Its function is as follows. Major facilitator superfamily transporter that may be involved in A.fumigatus adaptation to azoles such as vorizonazole. The polypeptide is Major facilitator superfamily transporter mfsA (Aspergillus fumigatus (strain ATCC MYA-4609 / CBS 101355 / FGSC A1100 / Af293) (Neosartorya fumigata)).